Reading from the N-terminus, the 134-residue chain is Cytochrome b5 (134 aa).

Residues 6–82 (TKTFTRAEVA…MKKYKIGELV (77 aa)) enclose the Cytochrome b5 heme-binding domain. Positions 41 and 65 each coordinate heme. The segment at 86–105 (RTSVAQKSEPTWSTEQQTEE) is disordered. Positions 87–105 (TSVAQKSEPTWSTEQQTEE) are enriched in polar residues. The chain crosses the membrane as a helical span at residues 111-131 (WLVPLVLCLVATLFYKFFFGG).

It belongs to the cytochrome b5 family.

The protein resides in the endoplasmic reticulum membrane. It localises to the microsome membrane. In terms of biological role, cytochrome b5 is a membrane-bound hemoprotein which functions as an electron carrier for several membrane-bound oxygenases. This is Cytochrome b5 (Cyt-b5) from Drosophila melanogaster (Fruit fly).